The chain runs to 345 residues: UDP-3-O-acylglucosamine N-acyltransferase (345 aa).

The active-site Proton acceptor is His-248.

It belongs to the transferase hexapeptide repeat family. LpxD subfamily. Homotrimer.

The catalysed reaction is a UDP-3-O-[(3R)-3-hydroxyacyl]-alpha-D-glucosamine + a (3R)-hydroxyacyl-[ACP] = a UDP-2-N,3-O-bis[(3R)-3-hydroxyacyl]-alpha-D-glucosamine + holo-[ACP] + H(+). Its pathway is bacterial outer membrane biogenesis; LPS lipid A biosynthesis. Functionally, catalyzes the N-acylation of UDP-3-O-acylglucosamine using 3-hydroxyacyl-ACP as the acyl donor. Is involved in the biosynthesis of lipid A, a phosphorylated glycolipid that anchors the lipopolysaccharide to the outer membrane of the cell. This chain is UDP-3-O-acylglucosamine N-acyltransferase, found in Trichodesmium erythraeum (strain IMS101).